The sequence spans 241 residues: LexA repressor (241 aa).

A DNA-binding region (H-T-H motif) is located at residues 41-61 (FREIGNAAGLKSPSSVKHQLQ). Active-site for autocatalytic cleavage activity residues include Ser165 and Lys202.

This sequence belongs to the peptidase S24 family. In terms of assembly, homodimer.

The catalysed reaction is Hydrolysis of Ala-|-Gly bond in repressor LexA.. Represses a number of genes involved in the response to DNA damage (SOS response), including recA and lexA. In the presence of single-stranded DNA, RecA interacts with LexA causing an autocatalytic cleavage which disrupts the DNA-binding part of LexA, leading to derepression of the SOS regulon and eventually DNA repair. The chain is LexA repressor from Bifidobacterium longum (strain DJO10A).